Reading from the N-terminus, the 549-residue chain is Probable amidase (549 aa).

Catalysis depends on charge relay system residues lysine 132 and serine 209. Serine 233 (acyl-ester intermediate) is an active-site residue.

The protein belongs to the amidase family.

The catalysed reaction is a monocarboxylic acid amide + H2O = a monocarboxylate + NH4(+). The polypeptide is Probable amidase (AMD2) (Saccharomyces cerevisiae (strain ATCC 204508 / S288c) (Baker's yeast)).